Here is a 202-residue protein sequence, read N- to C-terminus: Na(+)-translocating NADH-quinone reductase subunit E (202 aa).

The next 6 helical transmembrane spans lie at 4–24, 35–55, 81–101, 114–134, 144–164, and 180–200; these read LAGL…FFLG, IEVA…TVPI, FLGL…LEMF, GIYL…LFMV, LVYG…LAGV, and LGIT…FSGI.

This sequence belongs to the NqrDE/RnfAE family. As to quaternary structure, composed of six subunits; NqrA, NqrB, NqrC, NqrD, NqrE and NqrF.

Its subcellular location is the cell inner membrane. The catalysed reaction is a ubiquinone + n Na(+)(in) + NADH + H(+) = a ubiquinol + n Na(+)(out) + NAD(+). Functionally, NQR complex catalyzes the reduction of ubiquinone-1 to ubiquinol by two successive reactions, coupled with the transport of Na(+) ions from the cytoplasm to the periplasm. NqrA to NqrE are probably involved in the second step, the conversion of ubisemiquinone to ubiquinol. In Nitrosomonas europaea (strain ATCC 19718 / CIP 103999 / KCTC 2705 / NBRC 14298), this protein is Na(+)-translocating NADH-quinone reductase subunit E.